Consider the following 272-residue polypeptide: Shikimate dehydrogenase (NADP(+)) (272 aa).

Shikimate-binding positions include 14–16 and Thr61; that span reads SKS. The active-site Proton acceptor is the Lys65. Residue Glu77 coordinates NADP(+). Asn86 and Asp102 together coordinate shikimate. NADP(+)-binding positions include 126–130, 149–154, and Met213; these read GAGGA and NRTVSR. Tyr215 is a shikimate binding site. Gly237 serves as a coordination point for NADP(+).

The protein belongs to the shikimate dehydrogenase family. As to quaternary structure, homodimer.

The catalysed reaction is shikimate + NADP(+) = 3-dehydroshikimate + NADPH + H(+). Its pathway is metabolic intermediate biosynthesis; chorismate biosynthesis; chorismate from D-erythrose 4-phosphate and phosphoenolpyruvate: step 4/7. Involved in the biosynthesis of the chorismate, which leads to the biosynthesis of aromatic amino acids. Catalyzes the reversible NADPH linked reduction of 3-dehydroshikimate (DHSA) to yield shikimate (SA). The polypeptide is Shikimate dehydrogenase (NADP(+)) (Shigella sonnei (strain Ss046)).